Consider the following 126-residue polypeptide: Aspartate 1-decarboxylase (126 aa).

Serine 25 (schiff-base intermediate with substrate; via pyruvic acid) is an active-site residue. Serine 25 is modified (pyruvic acid (Ser)). Threonine 57 serves as a coordination point for substrate. The active-site Proton donor is the tyrosine 58. Position 73–75 (glycine 73–alanine 75) interacts with substrate.

It belongs to the PanD family. Heterooctamer of four alpha and four beta subunits. The cofactor is pyruvate. In terms of processing, is synthesized initially as an inactive proenzyme, which is activated by self-cleavage at a specific serine bond to produce a beta-subunit with a hydroxyl group at its C-terminus and an alpha-subunit with a pyruvoyl group at its N-terminus.

It is found in the cytoplasm. The catalysed reaction is L-aspartate + H(+) = beta-alanine + CO2. It functions in the pathway cofactor biosynthesis; (R)-pantothenate biosynthesis; beta-alanine from L-aspartate: step 1/1. In terms of biological role, catalyzes the pyruvoyl-dependent decarboxylation of aspartate to produce beta-alanine. The protein is Aspartate 1-decarboxylase of Salmonella dublin (strain CT_02021853).